Reading from the N-terminus, the 32-residue chain is Cytochrome b6-f complex subunit 7 (32 aa).

Residues 5-25 (IFGTAAIFWVLIPIGLVGGAL) form a helical membrane-spanning segment.

This sequence belongs to the PetM family. The 4 large subunits of the cytochrome b6-f complex are cytochrome b6, subunit IV (17 kDa polypeptide, PetD), cytochrome f and the Rieske protein, while the 4 small subunits are PetG, PetL, PetM and PetN. The complex functions as a dimer.

The protein resides in the cellular thylakoid membrane. Its function is as follows. Component of the cytochrome b6-f complex, which mediates electron transfer between photosystem II (PSII) and photosystem I (PSI), cyclic electron flow around PSI, and state transitions. This chain is Cytochrome b6-f complex subunit 7, found in Synechococcus sp. (strain CC9902).